A 249-amino-acid polypeptide reads, in one-letter code: Olfactory receptor 1571 (249 aa).

A helical transmembrane segment spans residues 1–9; it reads LLMCNLCFA. Topologically, residues 10–40 are extracellular; sequence DICFTSASIPTNLVNIQTKNKVITYEGCISQ. Cysteine 37 and cysteine 119 form a disulfide bridge. The chain crosses the membrane as a helical span at residues 41–60; sequence VYFFILFGVLDNFLLAVMAY. The Cytoplasmic portion of the chain corresponds to 61–82; the sequence is DRYVAICHPLHYTVIMNRRLCG. Residues 83 to 103 form a helical membrane-spanning segment; the sequence is LLVLGSWVTTALNSLLQSSMA. Topologically, residues 104–136 are extracellular; it reads LRLSFCTDLKIPHFVCELNQLVLLACNDTFPND. An N-linked (GlcNAc...) asparagine glycan is attached at asparagine 130. The helical transmembrane segment at 137 to 158 threads the bilayer; it reads MVMYFAAVLLGGGPLAGILYSY. Topologically, residues 159–180 are cytoplasmic; sequence SKIVSSIRAISSSQGKYKAFST. Residues 181-200 traverse the membrane as a helical segment; the sequence is CASHLSVVSLFYSTLLGVYL. Residues 201-210 lie on the Extracellular side of the membrane; the sequence is SSSFTQNSHS. Residues 211-232 traverse the membrane as a helical segment; the sequence is TARASVMYSVVTPMLNPFIYSL. Residues 233 to 249 lie on the Cytoplasmic side of the membrane; it reads RNKDLMGALRRLFRRKP.

This sequence belongs to the G-protein coupled receptor 1 family. Tongue specific.

It is found in the cell membrane. Its function is as follows. Possible taste receptor. The sequence is that of Olfactory receptor 1571 (Olr1571) from Rattus norvegicus (Rat).